We begin with the raw amino-acid sequence, 266 residues long: 15-hydroxyprostaglandin dehydrogenase [NAD(+)] (266 aa).

NAD(+) is bound by residues 12–20, 36–37, 63–65, and Asn91; these read GAAQGIGRA, DW, and CDV. Substrate-binding residues include Ser138 and Gln148. Tyr151 functions as the Proton acceptor in the catalytic mechanism. Residues 151-155 and 186-188 each bind NAD(+); these read YCASK and VNT.

It belongs to the short-chain dehydrogenases/reductases (SDR) family. Homodimer.

It localises to the cytoplasm. The catalysed reaction is prostaglandin E2 + NAD(+) = 15-oxoprostaglandin E2 + NADH + H(+). It catalyses the reaction (15S)-hydroxy-(5Z,8Z,11Z,13E)-eicosatetraenoate + NAD(+) = 15-oxo-(5Z,8Z,11Z,13E)-eicosatetraenoate + NADH + H(+). It carries out the reaction (11R)-hydroxy-(5Z,8Z,12E,14Z)-eicosatetraenoate + NAD(+) = 11-oxo-(5Z,8Z,12E,14Z)-eicosatetraenoate + NADH + H(+). The enzyme catalyses lipoxin A4 + NAD(+) = 15-oxo-(5S,6R)-dihydroxy-(7E,9E,11Z,13E)-eicosatetraenoate + NADH + H(+). The catalysed reaction is 15-oxo-(5S,6R)-dihydroxy-(7E,9E,11Z)-eicosatrienoate + NADH + H(+) = (5S,6R,15S)-trihydroxy-(7E,9E,11Z)-eicosatrienoate + NAD(+). It catalyses the reaction prostaglandin A1 + NAD(+) = 15-oxo-prostaglandin A1 + NADH + H(+). It carries out the reaction prostaglandin E1 + NAD(+) = 15-oxoprostaglandin E1 + NADH + H(+). The enzyme catalyses 14-hydroxy-(4Z,7Z,10Z,12E,16Z,19Z)-docosahexaenoate + NAD(+) = 14-oxo-(4Z,7Z,10Z,12E,16Z,19Z)-docosahexaenoate + NADH + H(+). The catalysed reaction is resolvin E1 + NAD(+) = 18-oxo-resolvin E1 + NADH + H(+). It catalyses the reaction resolvin D1 + NAD(+) = 8-oxoresolvin D1 + NADH + H(+). It carries out the reaction resolvin D1 + NAD(+) = 17-oxoresolvin D1 + NADH + H(+). The enzyme catalyses resolvin D2 + NAD(+) = 7-oxoresolvin D2 + NADH + H(+). The catalysed reaction is resolvin D2 + NAD(+) = 16-oxoresolvin D2 + NADH + H(+). Functionally, catalyzes the NAD-dependent dehydrogenation (oxidation) of a broad array of hydroxylated polyunsaturated fatty acids (mainly eicosanoids and docosanoids, including prostaglandins, lipoxins and resolvins), yielding their corresponding keto (oxo) metabolites. Decreases the levels of the pro-proliferative prostaglandins such as prostaglandin E2 (whose activity is increased in cancer because of an increase in the expression of cyclooxygenase 2) and generates oxo-fatty acid products that can profoundly influence cell function by abrogating pro-inflammatory cytokine expression. Converts resolvins E1, D1 and D2 to their oxo products, which represents a mode of resolvin inactivation. Resolvin E1 plays important roles during the resolution phase of acute inflammation, while resolvins D1 and D2 have a unique role in obesity-induced adipose inflammation. The chain is 15-hydroxyprostaglandin dehydrogenase [NAD(+)] (HPGD) from Macaca fascicularis (Crab-eating macaque).